Reading from the N-terminus, the 300-residue chain is N-acetylmuramic acid 6-phosphate etherase (300 aa).

An SIS domain is found at 57 to 220 (IAVAFQSGGR…TTGAMIRTGK (164 aa)). E85 serves as the catalytic Proton donor. Residue E116 is part of the active site.

It belongs to the GCKR-like family. MurNAc-6-P etherase subfamily. Homodimer.

It carries out the reaction N-acetyl-D-muramate 6-phosphate + H2O = N-acetyl-D-glucosamine 6-phosphate + (R)-lactate. It functions in the pathway amino-sugar metabolism; 1,6-anhydro-N-acetylmuramate degradation. The protein operates within amino-sugar metabolism; N-acetylmuramate degradation. It participates in cell wall biogenesis; peptidoglycan recycling. Its function is as follows. Specifically catalyzes the cleavage of the D-lactyl ether substituent of MurNAc 6-phosphate, producing GlcNAc 6-phosphate and D-lactate. Together with AnmK, is also required for the utilization of anhydro-N-acetylmuramic acid (anhMurNAc) either imported from the medium or derived from its own cell wall murein, and thus plays a role in cell wall recycling. In Aliivibrio fischeri (strain MJ11) (Vibrio fischeri), this protein is N-acetylmuramic acid 6-phosphate etherase.